A 908-amino-acid polypeptide reads, in one-letter code: NADH-quinone oxidoreductase subunit G (908 aa).

Positions 2-83 (ATIHVDGKEY…GTFISIDDEE (82 aa)) constitute a 2Fe-2S ferredoxin-type domain. [2Fe-2S] cluster-binding residues include C34, C45, C48, and C67. A 4Fe-4S His(Cys)3-ligated-type domain is found at 83-122 (EAKQFRESVVEWLMTNHPHDCPVCEEGGNCHLQDMTVMTG). Residues H99, C103, C106, C112, C151, C154, C157, C201, C228, C231, C235, and C263 each contribute to the [4Fe-4S] cluster site. In terms of domain architecture, 4Fe-4S Mo/W bis-MGD-type spans 221–277 (MQFAPSICQQCSIGCNISPGERYGELRRIENRYNGTVNHYFLCDRGRFGYGYVNLKD).

This sequence belongs to the complex I 75 kDa subunit family. In terms of assembly, composed of 13 different subunits. Subunits NuoCD, E, F, and G constitute the peripheral sector of the complex. [2Fe-2S] cluster serves as cofactor. The cofactor is [4Fe-4S] cluster.

The enzyme catalyses a quinone + NADH + 5 H(+)(in) = a quinol + NAD(+) + 4 H(+)(out). NDH-1 shuttles electrons from NADH, via FMN and iron-sulfur (Fe-S) centers, to quinones in the respiratory chain. The immediate electron acceptor for the enzyme in this species is believed to be ubiquinone. Couples the redox reaction to proton translocation (for every two electrons transferred, four hydrogen ions are translocated across the cytoplasmic membrane), and thus conserves the redox energy in a proton gradient. This is NADH-quinone oxidoreductase subunit G (nuoG) from Escherichia coli O6:H1 (strain CFT073 / ATCC 700928 / UPEC).